The primary structure comprises 57 residues: uncharacterized protein (57 aa).

Residues 1–57 (MITPIGKNSNSNSNSNSNSNSNSNSNSNSNSNSNSNSNSNSNSNSNSNSNSNSNSNN) form a disordered region. The span at 8–57 (NSNSNSNSNSNSNSNSNSNSNSNSNSNSNSNSNSNSNSNSNSNSNSNSNN) shows a compositional bias: low complexity.

This is an uncharacterized protein from Dictyostelium discoideum (Social amoeba).